A 255-amino-acid polypeptide reads, in one-letter code: Putative OPA3-like protein CG13603 (255 aa).

Positions 108–154 (KENKKNELAQSEKMELTNMLTEMNFRLERQDAQIREMTRVLADLDSR) form a coiled coil. A disordered region spans residues 168–187 (VPFDPDTPDQSASARNPKKF). Positions 212–241 (DGRNRKAKEALQHLDEVAVQLEQSLGEAAT) form a coiled coil.

It belongs to the OPA3 family.

This chain is Putative OPA3-like protein CG13603, found in Drosophila melanogaster (Fruit fly).